The sequence spans 283 residues: 1-deoxypentalenic acid 11-beta-hydroxylase (283 aa).

Arginine 117 lines the substrate pocket. Histidine 135 and aspartate 137 together coordinate Fe cation. 2-oxoglutarate-binding positions include 135-137 (HQD) and tryptophan 151. Residue arginine 186 coordinates substrate. Histidine 224 is a Fe cation binding site. Residues serine 226 and arginine 238 each coordinate 2-oxoglutarate. Positions 251 to 283 (HRGFNALTPWPESAKDASKGIMSKITGTPTTAE) are disordered.

Belongs to the PhyH family. Fe cation serves as cofactor. L-ascorbate is required as a cofactor.

The enzyme catalyses 1-deoxypentalenate + 2-oxoglutarate + O2 = 1-deoxy-11beta-hydroxypentalenate + succinate + CO2. It functions in the pathway antibiotic biosynthesis; pentalenolactone biosynthesis. Catalyzes the conversion of 1-deoxypentalenic acid to 11-beta-hydroxy-1-deoxypentalenic acid in the biosynthesis of pentalenolactone antibiotic. The chain is 1-deoxypentalenic acid 11-beta-hydroxylase (pntH) from Streptomyces arenae.